A 184-amino-acid polypeptide reads, in one-letter code: Inner membrane-spanning protein YciB (184 aa).

5 consecutive transmembrane segments (helical) span residues 19–39 (LVGIREAAITLIIATLIQLLI), 52–72 (LFMGIAVVFFGTLTAYFNQLE), 76–96 (WKVTIVYAIFALVLLVSQYGF), 123–143 (LGWALFFLLCMLINLYISQYL), and 151–171 (FKTFGILGMTLIATIITGIYI).

Belongs to the YciB family.

The protein resides in the cell inner membrane. Its function is as follows. Plays a role in cell envelope biogenesis, maintenance of cell envelope integrity and membrane homeostasis. The polypeptide is Inner membrane-spanning protein YciB (Pasteurella multocida (strain Pm70)).